The sequence spans 327 residues: Putative HTH-type transcriptional regulatory protein MM_0444 (327 aa).

In terms of domain architecture, HTH cro/C1-type spans 132–190; it reads LKKARTTQSMSLGTLASMVGVSRRTISKYEEEGMDASIDVVLHLEDIFGVELAKPIDIL. Positions 143 to 162 form a DNA-binding region, H-T-H motif; the sequence is LGTLASMVGVSRRTISKYEE. The tract at residues 195-214 is disordered; that stretch reads SRKPRKKAEPEKEEPKGKPG. Residues 201 to 211 are compositionally biased toward basic and acidic residues; the sequence is KAEPEKEEPKG.

In Methanosarcina mazei (strain ATCC BAA-159 / DSM 3647 / Goe1 / Go1 / JCM 11833 / OCM 88) (Methanosarcina frisia), this protein is Putative HTH-type transcriptional regulatory protein MM_0444.